The sequence spans 552 residues: Non-structural protein NS1 (552 aa).

This sequence belongs to the orbivirus non-structural protein NS1 family.

This chain is Non-structural protein NS1 (Segment-5), found in Antilocapra americana (Pronghorn).